A 167-amino-acid chain; its full sequence is Small ribosomal subunit protein uS5 (167 aa).

Residues 12–75 enclose the S5 DRBM domain; the sequence is LQEKLITVNR…EQARRNMITI (64 aa).

Belongs to the universal ribosomal protein uS5 family. As to quaternary structure, part of the 30S ribosomal subunit. Contacts proteins S4 and S8.

In terms of biological role, with S4 and S12 plays an important role in translational accuracy. Functionally, located at the back of the 30S subunit body where it stabilizes the conformation of the head with respect to the body. The chain is Small ribosomal subunit protein uS5 from Buchnera aphidicola subsp. Acyrthosiphon pisum (strain APS) (Acyrthosiphon pisum symbiotic bacterium).